We begin with the raw amino-acid sequence, 1327 residues long: P-glycoprotein 14 (1327 aa).

A compositionally biased stretch (basic and acidic residues) spans 1 to 17; sequence MAPKDDPDNRGFDDQRR. The segment at 1–23 is disordered; the sequence is MAPKDDPDNRGFDDQRRPSQRST. The Cytoplasmic portion of the chain corresponds to 1-104; it reads MAPKDDPDNR…RYGKKFDYLL (104 aa). A helical transmembrane segment spans residues 105 to 125; it reads LFIGTICAIISGVSQPILALV. The ABC transmembrane type-1 1 domain maps to 106-394; the sequence is FIGTICAIIS…ISPHMMVLLN (289 aa). Residues 126-151 lie on the Extracellular side of the membrane; the sequence is SGRVTNALLVYPPTSKQFRNKANENV. A helical membrane pass occupies residues 152-172; that stretch reads YIFLGIGIFISITNFIQYMCF. The Cytoplasmic portion of the chain corresponds to 173 to 225; sequence QHCCTRVMAQMRHRFVYSVLRQNAGWFDKNHSGTITTKLNDSMERIREGIGDK. A helical membrane pass occupies residues 226 to 246; the sequence is LGVLLRGFAMLIAAIVVAYIY. Glu247 is a topological domain (extracellular). The helical transmembrane segment at 248 to 268 threads the bilayer; the sequence is WRLASMMLGVAPTCCICMSLL. Over 269–331 the chain is Cytoplasmic; sequence ARQMTSTTIK…KFAVWKGFWS (63 aa). The helical transmembrane segment at 332–352 threads the bilayer; the sequence is GFFGGLFFFWLFSFLGCGMLY. Residues 353 to 364 are Extracellular-facing; the sequence is GAYLLKVGIITT. The chain crosses the membrane as a helical span at residues 365–385; it reads PGDVFIVVMSMLLGAYFLGLI. At 386-766 the chain is on the cytoplasmic side; it reads SPHMMVLLNA…NAKGNYLYMF (381 aa). An ABC transporter 1 domain is found at 429-665; that stretch reads VKFENVHFRY…GGRYFDLVKA (237 aa). Residue 464–471 coordinates ATP; that stretch reads GHSGCGKS. The interval 671-721 is disordered; sequence DPEATEEFEEEEIDLDDTSRSSRRSSMTSARSGSEAFRRGNSLNDSFSGSK. The segment covering 673 to 686 has biased composition (acidic residues); that stretch reads EATEEFEEEEIDLD. Residues 694-704 show a composition bias toward low complexity; that stretch reads RSSMTSARSGS. The segment covering 711–721 has biased composition (polar residues); the sequence is NSLNDSFSGSK. In terms of domain architecture, ABC transmembrane type-1 2 spans 766–1053; sequence FLGTVFALIR…SAQYFPEFVK (288 aa). Residues 767–789 form a helical membrane-spanning segment; the sequence is LGTVFALIRGLELPALALIFGWV. Over 790-805 the chain is Extracellular; it reads FEGFTFVPYGGRMMHR. The chain crosses the membrane as a helical span at residues 806–826; sequence MAMAVIAFASVGVGVWFSQLA. Over 827-886 the chain is Cytoplasmic; the sequence is SSVLFAVVSENLSMRFRVQSFRNLLYQDASYFDNPAHAPGKLITRLASDAPNIKAVVDAR. A helical transmembrane segment spans residues 887-907; it reads MLQVIYALAAIIANIAIAFIY. The Extracellular segment spans residues 908-910; sequence CWQ. Residues 911 to 931 traverse the membrane as a helical segment; it reads IGILGTSLILLLAFVMIGLAY. Residues 932 to 996 are Cytoplasmic-facing; sequence KISLMNVEQI…KGMIEAINYS (65 aa). A helical membrane pass occupies residues 997–1017; sequence LTQSFMYFMMCFTYAVGIRII. Residues 1018 to 1030 lie on the Extracellular side of the membrane; that stretch reads YQGDKSSDDTFKG. The helical transmembrane segment at 1031-1051 threads the bilayer; the sequence is IIAMMLGAVAVMNSAQYFPEF. The Cytoplasmic portion of the chain corresponds to 1052-1327; the sequence is VKAKTAAGML…KLIKKQDLAV (276 aa). An ABC transporter 2 domain is found at 1086–1322; the sequence is ILFENVKFSY…KGRYYKLIKK (237 aa). 1121-1128 contributes to the ATP binding site; that stretch reads GPSGSGKS.

Belongs to the ABC transporter superfamily. ABCB family. Multidrug resistance exporter (TC 3.A.1.201) subfamily. In terms of tissue distribution, expressed in pharyngeal epithelial cells that surround the anterior pharyngeal cuticle. Shares same expression pattern as sms-5.

Its subcellular location is the apical cell membrane. Contributes to the establishment of a polar lipid barrier to block small molecule passage into the pharyngeal cuticle. Probably exports polar lipids into the developing pharyngeal cuticle to protect against xenobiotic insult. Likely functions in the same pathway as sphingomyelin synthase sms-5. This chain is P-glycoprotein 14, found in Caenorhabditis elegans.